The sequence spans 92 residues: Phenol 2-monooxygenase, auxiliary component DmpK (92 aa).

In terms of assembly, homotrimer or homotetramer. Interacts with the phenol hydroxylase components DmpL (P1 component) and DmpN (P3 component).

Its pathway is aromatic compound metabolism; phenol degradation. Its function is as follows. DmpK is an auxiliary protein associated with the multicomponent phenol hydroxylase DmpLMNOP and it may be involved in the post-translational incorporation of iron into the oxygenase component of the phenol hydroxylase. Required for growth on phenol but not for in vitro phenol hydroxylase activity. This Pseudomonas sp. (strain CF600) protein is Phenol 2-monooxygenase, auxiliary component DmpK.